A 711-amino-acid chain; its full sequence is Nuclear intron maturase 1, mitochondrial (711 aa).

In terms of domain architecture, Reverse transcriptase spans 147-459 (KDKISMNGGE…RGIQFLDHII (313 aa)). The tract at residues 484–653 (GTLLSVSASL…QVLQEYIRLQ (170 aa)) is intron maturase type-2.

It belongs to the plant nuclear intron maturase (nMat) family. In terms of tissue distribution, expressed at low levels in seedlings and accumulates in adult plants.

The protein localises to the mitochondrion. Its function is as follows. Nuclear-encoded maturase required for splicing of group-II introns in mitochondria. Necessary for mitochondrial biogenesis during early developmental stages. Involved in the splicing of mitochondrial NAD4 transcripts. Required for trans-splicing of NAD1 intron 1 and also functions in cis-splicing of NAD2 intron 1 and NAD4 intron 2. Required for the regulation of fundamental metabolic pathways such as amino acid metabolism, triacylglycerol degradation and polysaccharide synthesis (cellulose and starch) during the early stage of plant growth. Implicated in stress responses. This chain is Nuclear intron maturase 1, mitochondrial, found in Arabidopsis thaliana (Mouse-ear cress).